The chain runs to 111 residues: COX assembly mitochondrial protein (111 aa).

The CHCH domain occupies 39 to 82 (YKKCANFVQAMADCAKANGMKVFPTCDKQRDEMKSCLLFYQTDE). 2 short sequence motifs (cx9C motif) span residues 42–52 (CANFVQAMADC) and 64–74 (CDKQRDEMKSC). 2 cysteine pairs are disulfide-bonded: C42-C74 and C52-C64.

It belongs to the CMC family.

It localises to the mitochondrion inner membrane. Functionally, required for mitochondrial cytochrome c oxidase (COX) assembly and respiration. Binds copper. May be involved in copper trafficking and distribution to mitochondrial COX and SOD1. This is COX assembly mitochondrial protein (CMC1) from Saccharomyces cerevisiae (strain RM11-1a) (Baker's yeast).